The sequence spans 59 residues: Small, acid-soluble spore protein H (59 aa).

It belongs to the SspH family.

The protein localises to the spore core. The chain is Small, acid-soluble spore protein H from Bacillus cereus (strain ZK / E33L).